Here is a 431-residue protein sequence, read N- to C-terminus: Glutamate-1-semialdehyde 2,1-aminomutase (431 aa).

K269 carries the N6-(pyridoxal phosphate)lysine modification.

Belongs to the class-III pyridoxal-phosphate-dependent aminotransferase family. HemL subfamily. In terms of assembly, homodimer. The cofactor is pyridoxal 5'-phosphate.

It localises to the cytoplasm. It carries out the reaction (S)-4-amino-5-oxopentanoate = 5-aminolevulinate. It functions in the pathway porphyrin-containing compound metabolism; protoporphyrin-IX biosynthesis; 5-aminolevulinate from L-glutamyl-tRNA(Glu): step 2/2. The protein operates within porphyrin-containing compound metabolism; chlorophyll biosynthesis. In Chlorobium phaeobacteroides (strain DSM 266 / SMG 266 / 2430), this protein is Glutamate-1-semialdehyde 2,1-aminomutase.